Here is a 151-residue protein sequence, read N- to C-terminus: Ubiquitin-conjugating enzyme E2 2 (151 aa).

In terms of domain architecture, UBC core spans 4 to 150; the sequence is AARRRLMRDF…VRETVEKSWE (147 aa). The active-site Glycyl thioester intermediate is the C88.

This sequence belongs to the ubiquitin-conjugating enzyme family.

The protein localises to the cytoplasm. Its subcellular location is the nucleus. The enzyme catalyses S-ubiquitinyl-[E1 ubiquitin-activating enzyme]-L-cysteine + [E2 ubiquitin-conjugating enzyme]-L-cysteine = [E1 ubiquitin-activating enzyme]-L-cysteine + S-ubiquitinyl-[E2 ubiquitin-conjugating enzyme]-L-cysteine.. The protein operates within protein modification; protein ubiquitination. Catalyzes the covalent attachment of ubiquitin to other proteins. Plays a role in transcription regulation by catalyzing the monoubiquitination of histone H2B to form H2BK123ub1. H2BK123ub1 gives a specific tag for epigenetic transcriptional activation and is also a prerequisite for H3K4me and H3K79me formation. Also involved in postreplication repair of UV-damaged DNA, in N-end rule-dependent protein degradation and in sporulation. The chain is Ubiquitin-conjugating enzyme E2 2 (UBC2) from Fusarium solani (Filamentous fungus).